The sequence spans 505 residues: L-carnitine/gamma-butyrobetaine antiporter (505 aa).

A run of 12 helical transmembrane segments spans residues 10–30, 51–71, 92–112, 143–163, 195–215, 231–251, 263–283, 316–336, 347–367, 403–423, 446–466, and 475–495; these read IEPK…WLTV, WGWA…WLVF, IFMM…SIEI, GPLP…FFFV, FYLV…TPLV, LDAI…ACGL, SYLS…SFIM, WTVF…IFLA, LCFG…TVLG, LSTA…VTLI, LLVR…LLAL, and AIIA…LSFI.

It belongs to the BCCT transporter (TC 2.A.15) family. CaiT subfamily. Homotrimer.

The protein resides in the cell inner membrane. It carries out the reaction 4-(trimethylamino)butanoate(in) + (R)-carnitine(out) = 4-(trimethylamino)butanoate(out) + (R)-carnitine(in). The protein operates within amine and polyamine metabolism; carnitine metabolism. In terms of biological role, catalyzes the exchange of L-carnitine for gamma-butyrobetaine. The sequence is that of L-carnitine/gamma-butyrobetaine antiporter from Salmonella paratyphi A (strain ATCC 9150 / SARB42).